Consider the following 85-residue polypeptide: LTGLFLAMHYTSDIATAFSSVAHICRDVNYGWLIRNIHANGASFFFICIYLHIGRGLYYGSYLYKETWNVGVVLLLLVMMTAFVG.

A run of 3 helical transmembrane segments spans residues Leu-1–Met-8, Trp-32–Ile-53, and Trp-68–Gly-85. Heme b-binding residues include His-38 and His-52.

Belongs to the cytochrome b family. The cytochrome bc1 complex contains 3 respiratory subunits (MT-CYB, CYC1 and UQCRFS1), 2 core proteins (UQCRC1 and UQCRC2) and probably 6 low-molecular weight proteins. Heme b serves as cofactor.

Its subcellular location is the mitochondrion inner membrane. Its function is as follows. Component of the ubiquinol-cytochrome c reductase complex (complex III or cytochrome b-c1 complex) that is part of the mitochondrial respiratory chain. The b-c1 complex mediates electron transfer from ubiquinol to cytochrome c. Contributes to the generation of a proton gradient across the mitochondrial membrane that is then used for ATP synthesis. In Pomoxis nigromaculatus (Black crappie), this protein is Cytochrome b (mt-cyb).